We begin with the raw amino-acid sequence, 427 residues long: Enolase (427 aa).

Gln163 contributes to the (2R)-2-phosphoglycerate binding site. Glu205 (proton donor) is an active-site residue. Mg(2+) contacts are provided by Asp242, Glu285, and Asp312. Lys337, Arg366, Ser367, and Lys388 together coordinate (2R)-2-phosphoglycerate. Lys337 acts as the Proton acceptor in catalysis.

The protein belongs to the enolase family. Mg(2+) is required as a cofactor.

The protein localises to the cytoplasm. It is found in the secreted. Its subcellular location is the cell surface. The catalysed reaction is (2R)-2-phosphoglycerate = phosphoenolpyruvate + H2O. It participates in carbohydrate degradation; glycolysis; pyruvate from D-glyceraldehyde 3-phosphate: step 4/5. In terms of biological role, catalyzes the reversible conversion of 2-phosphoglycerate (2-PG) into phosphoenolpyruvate (PEP). It is essential for the degradation of carbohydrates via glycolysis. The sequence is that of Enolase from Laribacter hongkongensis (strain HLHK9).